The following is a 138-amino-acid chain: Prefoldin subunit alpha (138 aa).

This sequence belongs to the prefoldin subunit alpha family. As to quaternary structure, heterohexamer of two alpha and four beta subunits.

Its subcellular location is the cytoplasm. Functionally, molecular chaperone capable of stabilizing a range of proteins. Seems to fulfill an ATP-independent, HSP70-like function in archaeal de novo protein folding. This Methanosphaera stadtmanae (strain ATCC 43021 / DSM 3091 / JCM 11832 / MCB-3) protein is Prefoldin subunit alpha.